The primary structure comprises 145 residues: D-aminoacyl-tRNA deacylase (145 aa).

Residues 137 to 138 (GP) carry the Gly-cisPro motif, important for rejection of L-amino acids motif.

The protein belongs to the DTD family. Homodimer.

Its subcellular location is the cytoplasm. The catalysed reaction is glycyl-tRNA(Ala) + H2O = tRNA(Ala) + glycine + H(+). It catalyses the reaction a D-aminoacyl-tRNA + H2O = a tRNA + a D-alpha-amino acid + H(+). Its function is as follows. An aminoacyl-tRNA editing enzyme that deacylates mischarged D-aminoacyl-tRNAs. Also deacylates mischarged glycyl-tRNA(Ala), protecting cells against glycine mischarging by AlaRS. Acts via tRNA-based rather than protein-based catalysis; rejects L-amino acids rather than detecting D-amino acids in the active site. By recycling D-aminoacyl-tRNA to D-amino acids and free tRNA molecules, this enzyme counteracts the toxicity associated with the formation of D-aminoacyl-tRNA entities in vivo and helps enforce protein L-homochirality. This chain is D-aminoacyl-tRNA deacylase, found in Deinococcus radiodurans (strain ATCC 13939 / DSM 20539 / JCM 16871 / CCUG 27074 / LMG 4051 / NBRC 15346 / NCIMB 9279 / VKM B-1422 / R1).